Reading from the N-terminus, the 227-residue chain is Uracil-DNA glycosylase (227 aa).

Asp68 (proton acceptor) is an active-site residue.

This sequence belongs to the uracil-DNA glycosylase (UDG) superfamily. UNG family.

It localises to the cytoplasm. The enzyme catalyses Hydrolyzes single-stranded DNA or mismatched double-stranded DNA and polynucleotides, releasing free uracil.. Excises uracil residues from the DNA which can arise as a result of misincorporation of dUMP residues by DNA polymerase or due to deamination of cytosine. This is Uracil-DNA glycosylase from Mycolicibacterium paratuberculosis (strain ATCC BAA-968 / K-10) (Mycobacterium paratuberculosis).